A 224-amino-acid chain; its full sequence is ATP-dependent dethiobiotin synthetase BioD (224 aa).

An ATP-binding site is contributed by Glu-12–Val-17. A Mg(2+)-binding site is contributed by Thr-16. Residue Lys-34 is part of the active site. Thr-38 provides a ligand contact to substrate. Residues Asp-47, Glu-106 to Gly-109, Gly-166 to Ser-167, and Pro-196 to Gly-198 each bind ATP. Mg(2+) is bound by residues Asp-47 and Glu-106.

This sequence belongs to the dethiobiotin synthetase family. In terms of assembly, homodimer. Mg(2+) is required as a cofactor.

It localises to the cytoplasm. It carries out the reaction (7R,8S)-7,8-diammoniononanoate + CO2 + ATP = (4R,5S)-dethiobiotin + ADP + phosphate + 3 H(+). It participates in cofactor biosynthesis; biotin biosynthesis; biotin from 7,8-diaminononanoate: step 1/2. Functionally, catalyzes a mechanistically unusual reaction, the ATP-dependent insertion of CO2 between the N7 and N8 nitrogen atoms of 7,8-diaminopelargonic acid (DAPA, also called 7,8-diammoniononanoate) to form a ureido ring. This Saccharopolyspora erythraea (strain ATCC 11635 / DSM 40517 / JCM 4748 / NBRC 13426 / NCIMB 8594 / NRRL 2338) protein is ATP-dependent dethiobiotin synthetase BioD.